Reading from the N-terminus, the 110-residue chain is Large ribosomal subunit protein uL22 (110 aa).

Over residues 85 to 95 (RGTASKIRKPT) the composition is skewed to basic residues. Residues 85-110 (RGTASKIRKPTSHVMVEVSKAQKKEA) form a disordered region.

It belongs to the universal ribosomal protein uL22 family. Part of the 50S ribosomal subunit.

In terms of biological role, this protein binds specifically to 23S rRNA; its binding is stimulated by other ribosomal proteins, e.g. L4, L17, and L20. It is important during the early stages of 50S assembly. It makes multiple contacts with different domains of the 23S rRNA in the assembled 50S subunit and ribosome. The globular domain of the protein is located near the polypeptide exit tunnel on the outside of the subunit, while an extended beta-hairpin is found that lines the wall of the exit tunnel in the center of the 70S ribosome. This Campylobacter curvus (strain 525.92) protein is Large ribosomal subunit protein uL22.